A 477-amino-acid polypeptide reads, in one-letter code: Calcium uptake protein 1, mitochondrial (477 aa).

Residues 1 to 33 (MFRLNTLSALAELAVGSRWYHGASQPTQTKRRL) constitute a mitochondrion transit peptide. Positions 57-107 (AESPPCVNSKKPDTEDKERNKDSGEVSSREGRAADAAAEPYPEDKKKKRSG) are disordered. Basic and acidic residues predominate over residues 66-89 (KKPDTEDKERNKDSGEVSSREGRA). Residues 101-112 (KKKKRSGFRDRK) form a polybasic region region. S124 bears the Phosphoserine; by PKB mark. The k/R-ring stretch occupies residues 128–131 (KIFR). The EF-hand 1 domain occupies 220 to 255 (TPQRNFEIAFKMFDLNGDGEVDMEEFEQVQSIIRSQ). Ca(2+) is bound by residues D233, N235, D237, E239, and E244. Residues 261 to 265 (RHRDR) are k/R-ring. The EF-hand 2; degenerate domain occupies 356–376 (KDGKGLTFQEVENFFTFLKNI). The EF-hand 3 domain occupies 410 to 445 (LSDHVCDVVFALFDCDGNGELSNKEFVSIMKQRLMR). Positions 423, 425, 427, 429, and 434 each coordinate Ca(2+). R457 carries the asymmetric dimethylarginine modification. The interval 457–467 (RLMQAMWKCAQ) is C-helix region.

This sequence belongs to the MICU1 family. MICU1 subfamily. Heterodimer; disulfide-linked; heterodimerizes with MICU2 or MICU3. Homodimer; disulfide-linked. Component of the uniplex complex, composed of MCU, EMRE/SMDT1, MICU1 and MICU2 (or MICU3) in a 4:4:1:1 stoichiometry. The composition of calcium sensors within the uniplex complex can differ depending on tissues: a MICU1 homodimer can be present instead of the MICU1-MICU2 heterodimer in skeletal-muscle and kidney. MICU1 is recruited to the uniplex complex by EMRE/SMDT1, and it associates with MCU at low calcium levels, occluding the pore of the MCU channel. Associates with the MICOS complex. Interacts with SLC25A23. Interacts with CHCHD4/MIA40; which introduces the interchain disulfide bond with MICU2. Interacts (when methylated) with UCP2; leading to decrease the calcium sensitivity of MICU1. In terms of assembly, heterodimer; disulfide-linked; heterodimerizes with MICU2 or MICU3. Heterodimerizes with MICU3 in skeletal muscle. Component of the uniplex complex, composed of MCU, EMRE/SMDT1, MICU1 and MICU2 (or MICU3) in a 4:4:1:1 stoichiometry. Also localizes to mitochondrial cristae junctions. Post-translationally, phosphorylation at Ser-124 by AKT1 impairs its maturation and stability. Asymmetric dimethylation at Arg-457 by PRMT1 decreases the calcium sensitivity of MICU1 by promoting interaction with UCP2. In terms of processing, degraded by YME1L1 when not complexed as homodimer or heterodimer. Not degraded when complexed as homodimer or heterodimer; the presence of the interchain disulfide bond protecting MICU1 from degradation by YME1L1. In terms of tissue distribution, expressed in skeletal muscle, heart, kidney, liver, brain, lung, fat and spleen. Specifically expressed in the skeletal muscle.

Its subcellular location is the mitochondrion intermembrane space. The protein localises to the mitochondrion inner membrane. Calcium sensor of the mitochondrial calcium uniporter (MCU) channel, which senses calcium level via its EF-hand domains. MICU1 and MICU2 (or MICU3) form a disulfide-linked heterodimer that stimulates and inhibits MCU activity, depending on the concentration of calcium. At low calcium levels, MICU1 occludes the pore of the MCU channel, preventing mitochondrial calcium uptake. At higher calcium levels, calcium-binding to MICU1 and MICU2 (or MICU3) induces a conformational change that weakens MCU-MICU1 interactions and moves the MICU1-MICU2 heterodimer away from the pore, allowing calcium permeation through the MCU channel. Also required to protect against manganese toxicity by preventing manganese uptake by MCU: mechanistically, manganese-binding to its EF-hand domains does not induce any conformational change, maintaining MCU pore occlusion. Acts as a regulator of mitochondrial cristae structure independently of its ability to regulate the mitochondrial calcium uniporter channel. Regulates glucose-dependent insulin secretion in pancreatic beta-cells by regulating mitochondrial calcium uptake. Induces T-helper 1-mediated autoreactivity, which is accompanied by the release of IFNG. Functionally, isoform that regulates mitochondrial calcium uniporter (MCU) in the skeletal muscle. Compared to other isoforms, this isoform has higher affinity for calcium, promoting mitochondrial calcium uptake at lower calcium concentrations. This allows a rapid response of mitochondrial metabolism and ensures sustained ATP production needed for resistance and strenuous exercise. This is Calcium uptake protein 1, mitochondrial from Mus musculus (Mouse).